A 453-amino-acid chain; its full sequence is MVEDTASVAALYRSYLTPLGIDINIVGTGRDAIESLNHRIPDLILLDLRLPDMTGMDVLHAVKKSHPDVPIIFMTAHGSIDTAVEAMRHGSQDFLIKPCEADRLRVTVNNAIRKATKLKNEADNPGNQNYQGFIGSSQTMQQVYRTIDSAASSKASIFITGESGTGKEVCAEAIHAASKRGDKPFIAINCAAIPKDLIESELFGHVKGAFTGAANDRQGAAELADGGTLFLDELCEMDLDLQTKLLRFIQTGTFQKVGSSKMKSVDVRFVCATNRDPWKEVQEGRFREDLYYRLYVIPLHLPPLRERGEDVIEIAYSLLGYMSHEEGKNFVRFSQEVIDRFNSYEWPGNVRQLQNVLRNIVVLNNGKEITLDMLPPPLNQPLDRPSVSKLIEPKAMTVSEIMPLWMTEKMAIEQAIEACDGNIPRAAGYLDVSPSTIYRKLQAWNGKEERQKV.

Residues 1-112 form the Response regulatory domain; sequence MVEDTASVAA…RLRVTVNNAI (112 aa). A 4-aspartylphosphate modification is found at aspartate 47. In terms of domain architecture, Sigma-54 factor interaction spans 133–362; sequence FIGSSQTMQQ…LQNVLRNIVV (230 aa). Residues 161 to 168 and 224 to 233 contribute to the ATP site; these read GESGTGKE and ADGGTLFLDE.

In terms of biological role, involved in the regulation of different processes depending on the cell density. Acts together with sigma-54 to repress, perhaps indirectly, some genes. The polypeptide is Regulatory protein LuxO (luxO) (Vibrio parahaemolyticus serotype O3:K6 (strain RIMD 2210633)).